Consider the following 354-residue polypeptide: Holliday junction branch migration complex subunit RuvB (354 aa).

A large ATPase domain (RuvB-L) region spans residues 1 to 183 (MTGDNLVSAY…FGFVAHLDFY (183 aa)). Residues Arg-23, Gly-64, Lys-67, Thr-68, Ser-69, 130–132 (EDF), Arg-173, Tyr-183, and Arg-220 each bind ATP. A Mg(2+)-binding site is contributed by Thr-68. The small ATPAse domain (RuvB-S) stretch occupies residues 184-254 (SPADLETLLN…TAQAALTVYD (71 aa)). The segment at 257 to 354 (ALGLDRLDRA…DLFSVEPDQP (98 aa)) is head domain (RuvB-H). Residues Arg-312 and Arg-317 each contribute to the DNA site.

The protein belongs to the RuvB family. In terms of assembly, homohexamer. Forms an RuvA(8)-RuvB(12)-Holliday junction (HJ) complex. HJ DNA is sandwiched between 2 RuvA tetramers; dsDNA enters through RuvA and exits via RuvB. An RuvB hexamer assembles on each DNA strand where it exits the tetramer. Each RuvB hexamer is contacted by two RuvA subunits (via domain III) on 2 adjacent RuvB subunits; this complex drives branch migration. In the full resolvosome a probable DNA-RuvA(4)-RuvB(12)-RuvC(2) complex forms which resolves the HJ.

The protein resides in the cytoplasm. The catalysed reaction is ATP + H2O = ADP + phosphate + H(+). The RuvA-RuvB-RuvC complex processes Holliday junction (HJ) DNA during genetic recombination and DNA repair, while the RuvA-RuvB complex plays an important role in the rescue of blocked DNA replication forks via replication fork reversal (RFR). RuvA specifically binds to HJ cruciform DNA, conferring on it an open structure. The RuvB hexamer acts as an ATP-dependent pump, pulling dsDNA into and through the RuvAB complex. RuvB forms 2 homohexamers on either side of HJ DNA bound by 1 or 2 RuvA tetramers; 4 subunits per hexamer contact DNA at a time. Coordinated motions by a converter formed by DNA-disengaged RuvB subunits stimulates ATP hydrolysis and nucleotide exchange. Immobilization of the converter enables RuvB to convert the ATP-contained energy into a lever motion, pulling 2 nucleotides of DNA out of the RuvA tetramer per ATP hydrolyzed, thus driving DNA branch migration. The RuvB motors rotate together with the DNA substrate, which together with the progressing nucleotide cycle form the mechanistic basis for DNA recombination by continuous HJ branch migration. Branch migration allows RuvC to scan DNA until it finds its consensus sequence, where it cleaves and resolves cruciform DNA. In Salinispora tropica (strain ATCC BAA-916 / DSM 44818 / JCM 13857 / NBRC 105044 / CNB-440), this protein is Holliday junction branch migration complex subunit RuvB.